A 405-amino-acid polypeptide reads, in one-letter code: Deoxyguanosinetriphosphate triphosphohydrolase-like protein (405 aa).

An HD domain is found at 75–219 (RLTHTIEVAQ…AAIADDIAYN (145 aa)).

Belongs to the dGTPase family. Type 2 subfamily.

This is Deoxyguanosinetriphosphate triphosphohydrolase-like protein from Agrobacterium fabrum (strain C58 / ATCC 33970) (Agrobacterium tumefaciens (strain C58)).